We begin with the raw amino-acid sequence, 650 residues long: FAS-associated factor 1 (650 aa).

The UBA domain maps to 1 to 57; the sequence is MASNMDREMILADFQACTGIENIDEAITLLEQNNWDLVAAINGVIPQENGILQSEYG. The tract at residues 62-87 is disordered; that stretch reads PGPAFNPASHPASAPTSSSSSAFRPV. The span at 68-83 shows a compositional bias: low complexity; that stretch reads PASHPASAPTSSSSSA. Serine 320 is modified (phosphoserine). The 78-residue stretch at 569-646 folds into the UBX domain; it reads NAEPVSKLRI…KLFPQETLFL (78 aa). The residue at position 580 (threonine 580) is a Phosphothreonine. At serine 582 the chain carries Phosphoserine.

Interacts with CDT1 and ATPase VCP/p97. Interacts (via UBA domain) with FAS (via death domain). Interacts (via UBA domain) with NLRP12 (via DAPIN/PYRIN domain). As to expression, most abundant in testis, slightly less abundant in skeletal muscle and heart, followed by prostate, thymus, ovary, small intestine, and colon. Not detected in the peripheral blood leukocytes.

It is found in the nucleus. Its function is as follows. Ubiquitin-binding protein. Required for the progression of DNA replication forks by targeting DNA replication licensing factor CDT1 for degradation. Potentiates but cannot initiate FAS-induced apoptosis. The polypeptide is FAS-associated factor 1 (FAF1) (Homo sapiens (Human)).